Here is a 596-residue protein sequence, read N- to C-terminus: MDQRRGNELDEFEKLLGEIPKVTSGNDYNHFPICLSSSRSQSIKKVDQYLPDDRAFTTSFSEANLHFGIPNHTPESPHPLFINPSYHSPSNSPCVYDKFDSRKLDPVMFRKLQQVGYLPNLSSGISPAQRQHYLPHSQPLSHYQSPMTWRDIEEENFQRLKLQEEQYLSINPHFLHLQSMDTVPRQDHFDYRRAEQSNRNLFWNGEDGNESVRKMCYPEKILMRSQMDLNTAKVIKYGAGDESQNGRLWLQNQLNEDLTMSLNNLSLQPQKYNSIAEARGKIYYLAKDQHGCRFLQRIFSEKDGNDIEMIFNEIIDYISELMMDPFGNYLVQKLLEVCNEDQRMQIVHSITRKPGLLIKISCDMHGTRAVQKIVETAKREEEISIIISALKHGIVHLIKNVNGNHVVQRCLQYLLPYCGKFLFEAAITHCVELATDRHGCCVLQKCLGYSEGEQKQHLVSEIASNALLLSQDPFGNYVLQYVFELQLQWATFEILEQLEGNYTELSMQKCSSNVVEKCLKLADDKHRARIIRELINYGRLDQVMLDPYGNYVIQAALKQSKGNVHALLVDAIKLNISSLRTNPYGKKVLSALSSKK.

In terms of domain architecture, PUM-HD spans 254–596; it reads LNEDLTMSLN…KVLSALSSKK (343 aa). Pumilio repeat units follow at residues 277-312, 313-348, 349-388, 389-424, 425-460, 461-496, 497-532, and 533-570; these read EARG…MIFN, EIID…QIVH, SITR…IIIS, ALKH…FLFE, AAIT…HLVS, EIAS…EILE, QLEG…RIIR, and ELIN…LLVD.

Its subcellular location is the cytoplasm. The protein resides in the nucleus. In terms of biological role, sequence-specific RNA-binding protein that regulates translation and mRNA stability by binding the 3'-UTR of target mRNAs. The chain is Pumilio homolog 12 (APUM12) from Arabidopsis thaliana (Mouse-ear cress).